The following is a 281-amino-acid chain: NADPH-dependent 7-cyano-7-deazaguanine reductase (281 aa).

88–90 lines the substrate pocket; it reads VES. Residue 90 to 91 participates in NADPH binding; it reads SK. The active-site Thioimide intermediate is the cysteine 189. The Proton donor role is filled by aspartate 196. A substrate-binding site is contributed by 228–229; it reads HE. 257-258 is an NADPH binding site; the sequence is RG.

It belongs to the GTP cyclohydrolase I family. QueF type 2 subfamily. As to quaternary structure, homodimer.

The protein localises to the cytoplasm. The catalysed reaction is 7-aminomethyl-7-carbaguanine + 2 NADP(+) = 7-cyano-7-deazaguanine + 2 NADPH + 3 H(+). It participates in tRNA modification; tRNA-queuosine biosynthesis. Functionally, catalyzes the NADPH-dependent reduction of 7-cyano-7-deazaguanine (preQ0) to 7-aminomethyl-7-deazaguanine (preQ1). The chain is NADPH-dependent 7-cyano-7-deazaguanine reductase from Cronobacter sakazakii (strain ATCC BAA-894) (Enterobacter sakazakii).